Here is a 265-residue protein sequence, read N- to C-terminus: MLRRFAVIGNPIAHSLSPVIHQMFAQQTQIELIYEKILGDDVKFEQQISDFFIQYGNGLNVTLPYKKRAYELAKIRTQRCALAGVANTLWMEENQLHADNTDGIGLIRDLSRFLELKDKKILILGAGGAARGIIFPLLEAKPLKLIVANRTLEKAEELKRQFPQINVTSFAELPEFFDLIINATSASLSDQVIALPEEAFSHKPFCYDLAYNQKTSTAFVQYARNGGCEAVDGLGMLVEQAAEAFFIWNKVMPSTQKILEHLRSF.

Residues 15–17 (SLS) and threonine 62 each bind shikimate. Residue lysine 66 is the Proton acceptor of the active site. Residues asparagine 87 and aspartate 102 each coordinate shikimate. Residues 125 to 129 (GAGGA), 149 to 154 (NRTLEK), and leucine 209 each bind NADP(+). Tyrosine 211 is a shikimate binding site. Residue glycine 233 participates in NADP(+) binding.

This sequence belongs to the shikimate dehydrogenase family. As to quaternary structure, homodimer.

The enzyme catalyses shikimate + NADP(+) = 3-dehydroshikimate + NADPH + H(+). It functions in the pathway metabolic intermediate biosynthesis; chorismate biosynthesis; chorismate from D-erythrose 4-phosphate and phosphoenolpyruvate: step 4/7. Involved in the biosynthesis of the chorismate, which leads to the biosynthesis of aromatic amino acids. Catalyzes the reversible NADPH linked reduction of 3-dehydroshikimate (DHSA) to yield shikimate (SA). In Legionella pneumophila (strain Corby), this protein is Shikimate dehydrogenase (NADP(+)).